The following is a 67-amino-acid chain: Sec-independent protein translocase protein TatA (67 aa).

A helical transmembrane segment spans residues 1 to 21; it reads MGSFSLTHWIIVLIIVVLIFG. The segment at 43 to 67 is disordered; that stretch reads LNEGTDGKEAQKDDVIEHKKDEDKA. A compositionally biased stretch (basic and acidic residues) spans 47 to 67; the sequence is TDGKEAQKDDVIEHKKDEDKA.

The protein belongs to the TatA/E family. As to quaternary structure, the Tat system comprises two distinct complexes: a TatABC complex, containing multiple copies of TatA, TatB and TatC subunits, and a separate TatA complex, containing only TatA subunits. Substrates initially bind to the TatABC complex, which probably triggers association of the separate TatA complex to form the active translocon.

It localises to the cell inner membrane. Functionally, part of the twin-arginine translocation (Tat) system that transports large folded proteins containing a characteristic twin-arginine motif in their signal peptide across membranes. TatA could form the protein-conducting channel of the Tat system. This Neisseria gonorrhoeae (strain ATCC 700825 / FA 1090) protein is Sec-independent protein translocase protein TatA.